The chain runs to 245 residues: Enolase-phosphatase E1 (245 aa).

The protein belongs to the HAD-like hydrolase superfamily. MasA/MtnC family. In terms of assembly, monomer. Requires Mg(2+) as cofactor.

It catalyses the reaction 5-methylsulfanyl-2,3-dioxopentyl phosphate + H2O = 1,2-dihydroxy-5-(methylsulfanyl)pent-1-en-3-one + phosphate. Its pathway is amino-acid biosynthesis; L-methionine biosynthesis via salvage pathway; L-methionine from S-methyl-5-thio-alpha-D-ribose 1-phosphate: step 3/6. It participates in amino-acid biosynthesis; L-methionine biosynthesis via salvage pathway; L-methionine from S-methyl-5-thio-alpha-D-ribose 1-phosphate: step 4/6. Bifunctional enzyme that catalyzes the enolization of 2,3-diketo-5-methylthiopentyl-1-phosphate (DK-MTP-1-P) into the intermediate 2-hydroxy-3-keto-5-methylthiopentenyl-1-phosphate (HK-MTPenyl-1-P), which is then dephosphorylated to form the acireductone 1,2-dihydroxy-3-keto-5-methylthiopentene (DHK-MTPene). This is Enolase-phosphatase E1 from Parasynechococcus marenigrum (strain WH8102).